We begin with the raw amino-acid sequence, 116 residues long: Large ribosomal subunit protein bL17 (116 aa).

The protein belongs to the bacterial ribosomal protein bL17 family. As to quaternary structure, part of the 50S ribosomal subunit. Contacts protein L32.

The protein is Large ribosomal subunit protein bL17 of Synechococcus sp. (strain WH7803).